Reading from the N-terminus, the 144-residue chain is Ribonuclease H (144 aa).

One can recognise an RNase H type-1 domain in the interval 1–141; that stretch reads MDKIDIYSDG…ADALANRGVE (141 aa). Mg(2+)-binding residues include aspartate 9, glutamate 47, aspartate 69, and aspartate 133.

It belongs to the RNase H family. Monomer. The cofactor is Mg(2+).

It is found in the cytoplasm. The catalysed reaction is Endonucleolytic cleavage to 5'-phosphomonoester.. Its function is as follows. Endonuclease that specifically degrades the RNA of RNA-DNA hybrids. The protein is Ribonuclease H of Janthinobacterium sp. (strain Marseille) (Minibacterium massiliensis).